Consider the following 234-residue polypeptide: Large ribosomal subunit protein uL1 (234 aa).

The protein belongs to the universal ribosomal protein uL1 family. In terms of assembly, part of the 50S ribosomal subunit.

Binds directly to 23S rRNA. The L1 stalk is quite mobile in the ribosome, and is involved in E site tRNA release. Its function is as follows. Protein L1 is also a translational repressor protein, it controls the translation of the L11 operon by binding to its mRNA. This chain is Large ribosomal subunit protein uL1, found in Salmonella arizonae (strain ATCC BAA-731 / CDC346-86 / RSK2980).